A 20-amino-acid polypeptide reads, in one-letter code: Venom prothrombin activator notanarin-D (20 aa).

Residues 1-10 enclose the Gla domain; the sequence is SNSLFEEVRP. A 4-carboxyglutamate mark is found at Glu6 and Glu7. The 10-residue stretch at 11-20 folds into the Peptidase S1 domain; sequence IVNGMDCKLG.

This sequence belongs to the peptidase S1 family. Snake venom subfamily. Heterodimer of a light chain and a heavy chain; disulfide-linked. Post-translationally, gamma-carboxyglutamate residues are formed by vitamin K dependent carboxylation. These residues are essential for the binding of calcium. In terms of tissue distribution, expressed by the venom gland.

The protein localises to the secreted. It carries out the reaction Selective cleavage of Arg-|-Thr and then Arg-|-Ile bonds in prothrombin to form thrombin.. Its function is as follows. Snake prothrombin activator that attacks the hemostatic system of prey. This protein is functionally similar to blood coagulation factor Xa. This Notechis scutatus niger (Peninsula tiger snake) protein is Venom prothrombin activator notanarin-D.